The primary structure comprises 242 residues: 1-(5-phosphoribosyl)-5-[(5-phosphoribosylamino)methylideneamino] imidazole-4-carboxamide isomerase (242 aa).

The Proton acceptor role is filled by D8. D129 serves as the catalytic Proton donor.

Belongs to the HisA/HisF family.

The protein localises to the cytoplasm. It catalyses the reaction 1-(5-phospho-beta-D-ribosyl)-5-[(5-phospho-beta-D-ribosylamino)methylideneamino]imidazole-4-carboxamide = 5-[(5-phospho-1-deoxy-D-ribulos-1-ylimino)methylamino]-1-(5-phospho-beta-D-ribosyl)imidazole-4-carboxamide. Its pathway is amino-acid biosynthesis; L-histidine biosynthesis; L-histidine from 5-phospho-alpha-D-ribose 1-diphosphate: step 4/9. In Clostridium botulinum (strain Okra / Type B1), this protein is 1-(5-phosphoribosyl)-5-[(5-phosphoribosylamino)methylideneamino] imidazole-4-carboxamide isomerase.